We begin with the raw amino-acid sequence, 146 residues long: Large ribosomal subunit protein uL15 (146 aa).

A disordered region spans residues M1–M54.

This sequence belongs to the universal ribosomal protein uL15 family. Part of the 50S ribosomal subunit.

Its function is as follows. Binds to the 23S rRNA. The chain is Large ribosomal subunit protein uL15 from Mycobacterium marinum (strain ATCC BAA-535 / M).